A 2053-amino-acid chain; its full sequence is Cell adhesion molecule DSCAML1 (2053 aa).

The N-terminal stretch at 1 to 18 (MWLVTFLLLLDSLHKARP) is a signal peptide. Ig-like C2-type domains lie at 19 to 119 (EDVG…NIRI), 115 to 217 (PNIR…ARLS), 226 to 310 (PTIL…GILT), 314 to 396 (PLHV…QTAQ), 408 to 501 (PRIV…ARIN), 506 to 586 (PSIR…LSIS), 596 to 685 (PPLI…RQLI), 690 to 784 (PRFV…MFLT), and 788 to 885 (PAMI…LTVQ). Over 19–1591 (EDVGTSLYFV…AQGEGDDVKK (1573 aa)) the chain is Extracellular. Intrachain disulfides connect cysteine 47/cysteine 103, cysteine 146/cysteine 198, cysteine 247/cysteine 294, cysteine 336/cysteine 386, cysteine 429/cysteine 485, cysteine 526/cysteine 575, and cysteine 617/cysteine 669. The N-linked (GlcNAc...) asparagine glycan is linked to asparagine 79. 2 N-linked (GlcNAc...) asparagine glycosylation sites follow: asparagine 368 and asparagine 471. Residues asparagine 666 and asparagine 710 are each glycosylated (N-linked (GlcNAc...) asparagine). The cysteines at positions 711 and 767 are disulfide-linked. Residue asparagine 809 is glycosylated (N-linked (GlcNAc...) asparagine). Cysteines 810 and 867 form a disulfide. Fibronectin type-III domains lie at 887–984 (PPDP…TEEA), 989–1088 (PPMD…TLED), 1093–1189 (PPEN…TKED), and 1193–1288 (PPAG…AGKA). Asparagine 1144 and asparagine 1162 each carry an N-linked (GlcNAc...) asparagine glycan. An Ig-like C2-type 10 domain is found at 1278 to 1377 (EKVTIEPAGK…TGGFDTIIVN (100 aa)). A disulfide bridge connects residues cysteine 1311 and cysteine 1363. Asparagine 1345 carries N-linked (GlcNAc...) asparagine glycosylation. Fibronectin type-III domains are found at residues 1383–1477 (PPDQ…THGR) and 1478–1578 (EPSF…TIPP). Asparagine 1561 is a glycosylation site (N-linked (GlcNAc...) asparagine). A helical membrane pass occupies residues 1592–1612 (LFTIGCPVILATLGVALLFVV). The Cytoplasmic portion of the chain corresponds to 1613–2053 (RKKRKEKRLK…GAYSKSYTLV (441 aa)). Disordered stretches follow at residues 1716-1741 (LIDMSDIRPGTNPVSRKNVKSAHSTR), 1773-1803 (HGVTVTESDSYSASLSQDTDKGRNSMVSTES), 1840-1862 (SSDQMTTGTNENADSMTSMSTPS), and 1974-2053 (LAMP…YTLV). Positions 1732–1741 (KNVKSAHSTR) are enriched in basic residues. The span at 1773–1789 (HGVTVTESDSYSASLSQ) shows a compositional bias: polar residues. The segment covering 1977–1993 (PAPPAGTAPPAPGPTPS) has biased composition (pro residues).

As to quaternary structure, homodimer; mediates homophilic interactions to promote cell adhesion. In the retina, expressed in the rod photoreceptors, AII amacrine cells and rod bipolar cells (at protein level).

It is found in the cell membrane. It localises to the synapse. In terms of biological role, cell adhesion molecule that plays a role in neuronal self-avoidance. Promotes repulsion between specific neuronal processes of either the same cell or the same subtype of cells. Promotes both isoneuronal self-avoidance for creating an orderly neurite arborization in retinal rod bipolar cells and heteroneuronal self-avoidance to maintain mosaic spacing between AII amacrine cells. Adhesion molecule that promotes lamina-specific synaptic connections in the retina: expressed in specific subsets of interneurons and retinal ganglion cells (RGCs) and promotes synaptic connectivity via homophilic interactions. The chain is Cell adhesion molecule DSCAML1 (Dscaml1) from Mus musculus (Mouse).